Reading from the N-terminus, the 413-residue chain is Probable Xaa-Pro aminopeptidase UREG_07123 (413 aa).

The Mn(2+) site is built by Asp-194, Asp-205, Glu-340, and Glu-379.

The protein belongs to the peptidase M24B family. Requires Mn(2+) as cofactor.

The catalysed reaction is Release of any N-terminal amino acid, including proline, that is linked to proline, even from a dipeptide or tripeptide.. Catalyzes the removal of a penultimate prolyl residue from the N-termini of peptides. In Uncinocarpus reesii (strain UAMH 1704), this protein is Probable Xaa-Pro aminopeptidase UREG_07123.